A 100-amino-acid polypeptide reads, in one-letter code: Transcription elongation factor A protein-like 7 (100 aa).

The segment covering 1–32 (MQKPCKENEGKPKCSVPKREEKRPYGEFERQQ) has biased composition (basic and acidic residues). A disordered region spans residues 1 to 34 (MQKPCKENEGKPKCSVPKREEKRPYGEFERQQTE). A coiled-coil region spans residues 60–88 (EEMTREGDEMERCLEEIRGLRKKFRALHS).

This sequence belongs to the TFS-II family. TFA subfamily. As to expression, highly expressed in normal and fetal brain tissues, and weakly expressed in uterus and ovary. Down-regulated in epithelial ovarian, cervical, prostate, breast, brain and lung cancer cell lines and in brain and ovarian tumors.

The protein localises to the nucleus. In terms of biological role, plays a role in the negative regulation of NF-kappa-B signaling at the basal level by modulating transcriptional activity of NF-kappa-B on its target gene promoters. Associates with cyclin D1 promoter containing Myc E-box sequence and transcriptionally represses cyclin D1 expression. Regulates telomerase reverse transcriptase expression and telomerase activity in both ALT (alternative lengthening of telomeres)and telomerase-positive cell lines. In Homo sapiens (Human), this protein is Transcription elongation factor A protein-like 7 (TCEAL7).